The chain runs to 106 residues: Transcription initiation factor IIA subunit 2 (106 aa).

It belongs to the TFIIA subunit 2 family. TFIIA is a heterodimer of the large unprocessed subunit 1 and a small subunit gamma. It was originally believed to be a heterotrimer of an alpha (p30), a beta (p20) and a gamma (p14) subunit. Forms a complex with Moonshiner/CG12721 and Trf2. As to expression, ubiquitous.

The protein resides in the nucleus. Its function is as follows. TFIIA is a component of the transcription machinery of RNA polymerase II and plays an important role in transcriptional activation. TFIIA in a complex with TBP mediates transcriptional activity. Part of a rhi-dependent transcription machinery that enables the generation of piRNA precursors from heterochromatin while maintaining the suppression of transposon-encoded promoters and enhancers. Forms a complex with Moonshiner/CG12721 and Trf2 which recruit transcriptional machinery to heterochromatin to initiate the bidirectional transcription of piRNA clusters, by interacting with the RDC (rhi, del and cuff) complex that binds to repressive H3K9me3 marks in the chromatin. This mechanism allows transcription to occur in piRNA clusters despite the lack of proper promoter elements and in the presence of the repressive H3K9me3 mark. The chain is Transcription initiation factor IIA subunit 2 (TfIIA-S) from Drosophila melanogaster (Fruit fly).